A 276-amino-acid polypeptide reads, in one-letter code: Large ribosomal subunit protein uL2 (276 aa).

The disordered stretch occupies residues 224–276 (VMNPVDHPHGGGEGKAPIGRKSPMTPWGKPTLGYKTRKKKNKSDKFIIRRRKK). The span at 258–276 (KTRKKKNKSDKFIIRRRKK) shows a compositional bias: basic residues.

This sequence belongs to the universal ribosomal protein uL2 family. Part of the 50S ribosomal subunit. Forms a bridge to the 30S subunit in the 70S ribosome.

Its function is as follows. One of the primary rRNA binding proteins. Required for association of the 30S and 50S subunits to form the 70S ribosome, for tRNA binding and peptide bond formation. It has been suggested to have peptidyltransferase activity; this is somewhat controversial. Makes several contacts with the 16S rRNA in the 70S ribosome. In Geobacillus stearothermophilus (Bacillus stearothermophilus), this protein is Large ribosomal subunit protein uL2.